The sequence spans 371 residues: 4-hydroxy-3-methylbut-2-en-1-yl diphosphate synthase (flavodoxin) (371 aa).

Residues cysteine 268, cysteine 271, cysteine 303, and glutamate 310 each contribute to the [4Fe-4S] cluster site.

Belongs to the IspG family. [4Fe-4S] cluster serves as cofactor.

The catalysed reaction is (2E)-4-hydroxy-3-methylbut-2-enyl diphosphate + oxidized [flavodoxin] + H2O + 2 H(+) = 2-C-methyl-D-erythritol 2,4-cyclic diphosphate + reduced [flavodoxin]. It functions in the pathway isoprenoid biosynthesis; isopentenyl diphosphate biosynthesis via DXP pathway; isopentenyl diphosphate from 1-deoxy-D-xylulose 5-phosphate: step 5/6. Functionally, converts 2C-methyl-D-erythritol 2,4-cyclodiphosphate (ME-2,4cPP) into 1-hydroxy-2-methyl-2-(E)-butenyl 4-diphosphate. The protein is 4-hydroxy-3-methylbut-2-en-1-yl diphosphate synthase (flavodoxin) of Lysinibacillus sphaericus (strain C3-41).